A 727-amino-acid polypeptide reads, in one-letter code: DNA topoisomerase 3 (727 aa).

Residues 3-136 (KTVVLAEKPS…IKRLWISSVT (134 aa)) form the Toprim domain. Glutamate 9 and aspartate 105 together coordinate Mg(2+). Residues 153–593 (YENLYHSAVA…DMKAYAHQTV (441 aa)) form the Topo IA-type catalytic domain. The segment at 187–192 (SCGRVQ) is interaction with DNA. Tyrosine 310 acts as the O-(5'-phospho-DNA)-tyrosine intermediate in catalysis. Residues 685 to 699 (KRKNKDKARATKRDV) show a composition bias toward basic and acidic residues. Residues 685-714 (KRKNKDKARATKRDVSSYMKKQNKDEPINN) form a disordered region.

The protein belongs to the type IA topoisomerase family. Mg(2+) serves as cofactor.

The catalysed reaction is ATP-independent breakage of single-stranded DNA, followed by passage and rejoining.. Releases the supercoiling and torsional tension of DNA, which is introduced during the DNA replication and transcription, by transiently cleaving and rejoining one strand of the DNA duplex. Introduces a single-strand break via transesterification at a target site in duplex DNA. The scissile phosphodiester is attacked by the catalytic tyrosine of the enzyme, resulting in the formation of a DNA-(5'-phosphotyrosyl)-enzyme intermediate and the expulsion of a 3'-OH DNA strand. The free DNA strand then undergoes passage around the unbroken strand, thus removing DNA supercoils. Finally, in the religation step, the DNA 3'-OH attacks the covalent intermediate to expel the active-site tyrosine and restore the DNA phosphodiester backbone. The chain is DNA topoisomerase 3 from Bacillus subtilis (strain 168).